Consider the following 171-residue polypeptide: Shikimate kinase (171 aa).

An ATP-binding site is contributed by 14–19 (GAGKST). Serine 18 provides a ligand contact to Mg(2+). Positions 36, 60, and 82 each coordinate substrate. Arginine 120 is an ATP binding site. Arginine 139 provides a ligand contact to substrate. ATP is bound at residue glutamine 156.

Belongs to the shikimate kinase family. As to quaternary structure, monomer. The cofactor is Mg(2+).

Its subcellular location is the cytoplasm. It catalyses the reaction shikimate + ATP = 3-phosphoshikimate + ADP + H(+). The protein operates within metabolic intermediate biosynthesis; chorismate biosynthesis; chorismate from D-erythrose 4-phosphate and phosphoenolpyruvate: step 5/7. Functionally, catalyzes the specific phosphorylation of the 3-hydroxyl group of shikimic acid using ATP as a cosubstrate. The sequence is that of Shikimate kinase from Shewanella denitrificans (strain OS217 / ATCC BAA-1090 / DSM 15013).